The sequence spans 75 residues: Putative antitoxin VapB29 (75 aa).

Possibly the antitoxic component of a type II toxin-antitoxin (TA) system. Its cognate toxin is VapC29 (Potential). The sequence is that of Putative antitoxin VapB29 (vapB29) from Mycobacterium tuberculosis (strain CDC 1551 / Oshkosh).